The primary structure comprises 182 residues: Ferritin heavy chain (182 aa).

Residue M1 is modified to N-acetylmethionine. T2 is modified (N-acetylthreonine; in Ferritin heavy chain, N-terminally processed). The Ferritin-like diiron domain maps to 11 to 160 (QNYHQDSEAA…DHVTNLRRMG (150 aa)). Fe cation-binding residues include E28, E63, H66, E108, and Q142.

It belongs to the ferritin family. In terms of assembly, oligomer of 24 subunits. There are two types of subunits: L (light) chain and H (heavy) chain. The major chain can be light or heavy, depending on the species and tissue type. The functional molecule forms a roughly spherical shell with a diameter of 12 nm and contains a central cavity into which the insoluble mineral iron core is deposited. Interacts with NCOA4; NCOA4 promotes targeting of the iron-binding ferritin complex to autolysosomes following starvation or iron depletion.

Its subcellular location is the cytoplasm. It localises to the lysosome. It is found in the cytoplasmic vesicle. The protein resides in the autophagosome. It catalyses the reaction 4 Fe(2+) + O2 + 4 H(+) = 4 Fe(3+) + 2 H2O. Its function is as follows. Stores iron in a soluble, non-toxic, readily available form. Important for iron homeostasis. Has ferroxidase activity. Iron is taken up in the ferrous form and deposited as ferric hydroxides after oxidation. Also plays a role in delivery of iron to cells. Mediates iron uptake in capsule cells of the developing kidney. Delivery to lysosomes is mediated by the cargo receptor NCOA4 for autophagic degradation and release of iron. The polypeptide is Ferritin heavy chain (FTH1) (Equus caballus (Horse)).